Consider the following 458-residue polypeptide: UDP-N-acetylmuramate--L-alanine ligase (458 aa).

112 to 118 (GTHGKTT) provides a ligand contact to ATP.

Belongs to the MurCDEF family.

It is found in the cytoplasm. It carries out the reaction UDP-N-acetyl-alpha-D-muramate + L-alanine + ATP = UDP-N-acetyl-alpha-D-muramoyl-L-alanine + ADP + phosphate + H(+). Its pathway is cell wall biogenesis; peptidoglycan biosynthesis. Cell wall formation. This chain is UDP-N-acetylmuramate--L-alanine ligase, found in Syntrophotalea carbinolica (strain DSM 2380 / NBRC 103641 / GraBd1) (Pelobacter carbinolicus).